We begin with the raw amino-acid sequence, 320 residues long: Methionyl-tRNA formyltransferase (320 aa).

114–117 (SLLP) contacts (6S)-5,6,7,8-tetrahydrofolate.

Belongs to the Fmt family.

The enzyme catalyses L-methionyl-tRNA(fMet) + (6R)-10-formyltetrahydrofolate = N-formyl-L-methionyl-tRNA(fMet) + (6S)-5,6,7,8-tetrahydrofolate + H(+). Attaches a formyl group to the free amino group of methionyl-tRNA(fMet). The formyl group appears to play a dual role in the initiator identity of N-formylmethionyl-tRNA by promoting its recognition by IF2 and preventing the misappropriation of this tRNA by the elongation apparatus. The protein is Methionyl-tRNA formyltransferase of Acinetobacter baumannii (strain SDF).